The following is a 425-amino-acid chain: uncharacterized protein (425 aa).

Residues 135 to 202 (KEQEILGCSH…AAQYCKYCKN (68 aa)) form a CHY-type zinc finger. Residues cysteine 142, histidine 144, cysteine 153, cysteine 156, cysteine 162, cysteine 165, histidine 166, histidine 172, cysteine 184, cysteine 187, cysteine 197, cysteine 200, cysteine 209, cysteine 212, histidine 225, cysteine 226, cysteine 229, cysteine 232, histidine 244, cysteine 245, cysteine 248, cysteine 251, histidine 260, and cysteine 262 each coordinate Zn(2+). The segment at 204-270 (MGRYYCNKCK…RCIERSTDCN (67 aa)) adopts a CTCHY-type zinc-finger fold. The RING-type; atypical zinc finger occupies 271-313 (CPICGEYMFNSRERVIFLSCSHPLHQRCHEEYIRTNYRCPTCY).

This is an uncharacterized protein from Schizosaccharomyces pombe (strain 972 / ATCC 24843) (Fission yeast).